The sequence spans 296 residues: MPELPEVETVKRGLAPAIEGALLVRAELRRPDLRFPFPENFAAAVSGRRILALSRRAKYLMIDLEGGDVIVAHLGMSGSFRIEAGAQPAAPGEFHHPRGKDEKHDHVIFHLDGGSGQMRVIYNDPRRFGFMDLARRDTIAEHAYFRDLGEEPTGNALDAAYLAARLAGKSQPLKTALLDQRTIAGLGNIYVCEALWRSGLSPNRAAGTLVDKRGRPKQALLALVEAIRAVIADAIAAGGSSLKDHIQADGSLGYFQHAFSVYDRAGEACRKPGCDGTVTRIVQAGRSTFHCPRCQK.

Catalysis depends on P2, which acts as the Schiff-base intermediate with DNA. The Proton donor role is filled by E3. The active-site Proton donor; for beta-elimination activity is the K58. DNA contacts are provided by H104, R126, and K169. The FPG-type zinc-finger motif lies at 260–296 (SVYDRAGEACRKPGCDGTVTRIVQAGRSTFHCPRCQK). R286 functions as the Proton donor; for delta-elimination activity in the catalytic mechanism.

It belongs to the FPG family. In terms of assembly, monomer. Zn(2+) serves as cofactor.

The enzyme catalyses Hydrolysis of DNA containing ring-opened 7-methylguanine residues, releasing 2,6-diamino-4-hydroxy-5-(N-methyl)formamidopyrimidine.. The catalysed reaction is 2'-deoxyribonucleotide-(2'-deoxyribose 5'-phosphate)-2'-deoxyribonucleotide-DNA = a 3'-end 2'-deoxyribonucleotide-(2,3-dehydro-2,3-deoxyribose 5'-phosphate)-DNA + a 5'-end 5'-phospho-2'-deoxyribonucleoside-DNA + H(+). In terms of biological role, involved in base excision repair of DNA damaged by oxidation or by mutagenic agents. Acts as a DNA glycosylase that recognizes and removes damaged bases. Has a preference for oxidized purines, such as 7,8-dihydro-8-oxoguanine (8-oxoG). Has AP (apurinic/apyrimidinic) lyase activity and introduces nicks in the DNA strand. Cleaves the DNA backbone by beta-delta elimination to generate a single-strand break at the site of the removed base with both 3'- and 5'-phosphates. The protein is Formamidopyrimidine-DNA glycosylase of Sinorhizobium fredii (strain NBRC 101917 / NGR234).